The chain runs to 304 residues: tRNA pseudouridine synthase B (304 aa).

Asp38 (nucleophile) is an active-site residue.

The protein belongs to the pseudouridine synthase TruB family. Type 1 subfamily.

The catalysed reaction is uridine(55) in tRNA = pseudouridine(55) in tRNA. Functionally, responsible for synthesis of pseudouridine from uracil-55 in the psi GC loop of transfer RNAs. This Listeria welshimeri serovar 6b (strain ATCC 35897 / DSM 20650 / CCUG 15529 / CIP 8149 / NCTC 11857 / SLCC 5334 / V8) protein is tRNA pseudouridine synthase B.